The chain runs to 349 residues: UDP-3-O-acylglucosamine N-acyltransferase (349 aa).

The Proton acceptor role is filled by His-248.

It belongs to the transferase hexapeptide repeat family. LpxD subfamily. As to quaternary structure, homotrimer.

The enzyme catalyses a UDP-3-O-[(3R)-3-hydroxyacyl]-alpha-D-glucosamine + a (3R)-hydroxyacyl-[ACP] = a UDP-2-N,3-O-bis[(3R)-3-hydroxyacyl]-alpha-D-glucosamine + holo-[ACP] + H(+). It functions in the pathway bacterial outer membrane biogenesis; LPS lipid A biosynthesis. In terms of biological role, catalyzes the N-acylation of UDP-3-O-acylglucosamine using 3-hydroxyacyl-ACP as the acyl donor. Is involved in the biosynthesis of lipid A, a phosphorylated glycolipid that anchors the lipopolysaccharide to the outer membrane of the cell. This Gloeothece citriformis (strain PCC 7424) (Cyanothece sp. (strain PCC 7424)) protein is UDP-3-O-acylglucosamine N-acyltransferase.